A 246-amino-acid polypeptide reads, in one-letter code: O-antigen export system ATP-binding protein RfbB (246 aa).

Residues 22 to 246 (SGIKDLVFHP…IIELYKQAMA (225 aa)) enclose the ABC transporter domain. 63–70 (GRNGAGKS) is a binding site for ATP.

This sequence belongs to the ABC transporter superfamily.

It localises to the cell inner membrane. Its function is as follows. May form an ATP-driven O-antigen export apparatus, in association with RfbA. The sequence is that of O-antigen export system ATP-binding protein RfbB (rfbB) from Klebsiella pneumoniae.